Consider the following 456-residue polypeptide: MGKTLFDKVWNKHVLTGKEGDPQLLYIDLHLIHEVTSPQAFEGLRLQNRQLRRPDLTYATLDHNVPTVDIFNIKDEIANKQITTLQKNAKAFGVHIFDMGSDEQGIVHMVGPETGLTQPGKTIVCGDSHTATHGAFGAIAFGIGTSEVEHVFATQSLWQTKPKNLKIEVNGKLPTGVYAKDIILHLINQHGVDFGTGYALEFSGETIRSLSMEARMTICNMAIEAGAKYGMMAPDETTFEYVKGRPYATNYKYDIDAWRELYTDEDAEFDRVITLDVTDLEPQVTWGTNPEMGVSFNTPFPEIQNVNDERAYNYMGLQPGQKAEDIDLGYVFLGSCTNARLSDLVEASHVVKGNKVHPNITAIVVPGSRTVKIEAEKLGLDKIFKDAGFDWREPGCSMCLGMNPDQVPNGVHCASTSNRNFEGRQGKGARTHLVSPAMAAAAAINGKFVDVRKVVV.

[4Fe-4S] cluster contacts are provided by Cys-336, Cys-396, and Cys-399.

It belongs to the aconitase/IPM isomerase family. LeuC type 1 subfamily. Heterodimer of LeuC and LeuD. [4Fe-4S] cluster serves as cofactor.

The enzyme catalyses (2R,3S)-3-isopropylmalate = (2S)-2-isopropylmalate. The protein operates within amino-acid biosynthesis; L-leucine biosynthesis; L-leucine from 3-methyl-2-oxobutanoate: step 2/4. Its function is as follows. Catalyzes the isomerization between 2-isopropylmalate and 3-isopropylmalate, via the formation of 2-isopropylmaleate. This is 3-isopropylmalate dehydratase large subunit from Staphylococcus saprophyticus subsp. saprophyticus (strain ATCC 15305 / DSM 20229 / NCIMB 8711 / NCTC 7292 / S-41).